The sequence spans 796 residues: Pleckstrin homology domain-containing family H member 3 (796 aa).

The first 18 residues, 1 to 18 (MPLPGGLWWLLCCRRGFT), serve as a signal peptide directing secretion. The segment at 28 to 71 (ELSGDGDEDEDDETFELRTPSPAGGGRGSLDVTLTQPTRNGPIS) is disordered. Residues 29–41 (LSGDGDEDEDDET) are compositionally biased toward acidic residues. Ser30 carries the phosphoserine modification. The segment covering 59 to 68 (VTLTQPTRNG) has biased composition (polar residues). A PH domain is found at 95–199 (DIIVKGWLYR…WGVALREVIA (105 aa)). Residues 237–399 (HTSSALYAPL…PSLAEISALS (163 aa)) enclose the MyTH4 domain. The FERM domain occupies 404–757 (LLCTVHCPGA…ANPSPERPCR (354 aa)). Asn474 carries N-linked (GlcNAc...) asparagine glycosylation. Disordered stretches follow at residues 557-584 (PLLDRLLPPPIPPREQPPCPTRRPPPSA) and 598-625 (KRRAERARRGGTGRSTGSTAQVGGGGAS). Pro residues predominate over residues 563 to 583 (LPPPIPPREQPPCPTRRPPPS). Residues 598-608 (KRRAERARRGG) show a composition bias toward basic residues. At Arg638 the chain carries Omega-N-methylarginine. The tract at residues 750–796 (PSPERPCRSGSSSGPPSQDLPDTSPPSQHQVLEEPQGQSGCLKQLQD) is disordered. The span at 757-766 (RSGSSSGPPS) shows a compositional bias: low complexity. Positions 774–796 (PPSQHQVLEEPQGQSGCLKQLQD) are enriched in polar residues.

The chain is Pleckstrin homology domain-containing family H member 3 (Plekhh3) from Mus musculus (Mouse).